A 437-amino-acid chain; its full sequence is 2-methylisoborneol synthase (437 aa).

Residues 32–125 (AHDSEATVGG…IPGLYHHPVP (94 aa)) form a disordered region. Positions 59–73 (PPSPAAPPTDVPAPE) are enriched in pro residues. Residues Asp-194, Asp-195, Glu-199, Asn-342, Ser-346, and Glu-350 each coordinate Mg(2+).

Belongs to the terpene synthase family. 2-methylisoborneol synthase subfamily. Mg(2+) is required as a cofactor.

It catalyses the reaction (E)-2-methylgeranyl diphosphate + H2O = 2-methylisoborneol + diphosphate. Its function is as follows. Catalyzes the cyclization of 2-methylgeranyl diphosphate (2-MeGPP) to 2-methylisoborneol (2-MIB), which likely involves the intermediacy of 2-methyllinalyl diphosphate. The chain is 2-methylisoborneol synthase from Streptomyces griseus.